Consider the following 200-residue polypeptide: Small ribosomal subunit protein uS4 (200 aa).

The tract at residues 22–42 (TGKELQKRPYPPGQHGPGQRR) is disordered. One can recognise an S4 RNA-binding domain in the interval 92 to 152 (SRLDNLVYRL…EKSRNLQVIK (61 aa)).

The protein belongs to the universal ribosomal protein uS4 family. As to quaternary structure, part of the 30S ribosomal subunit. Contacts protein S5. The interaction surface between S4 and S5 is involved in control of translational fidelity.

In terms of biological role, one of the primary rRNA binding proteins, it binds directly to 16S rRNA where it nucleates assembly of the body of the 30S subunit. Its function is as follows. With S5 and S12 plays an important role in translational accuracy. The sequence is that of Small ribosomal subunit protein uS4 from Geobacillus kaustophilus (strain HTA426).